The primary structure comprises 275 residues: Mitochondrial prohibitin complex protein 1 (275 aa).

Residues R180–A213 are a coiled coil.

The protein belongs to the prohibitin family. As to quaternary structure, high molecular weight complex that consist of phb-1 and phb-2.

The protein localises to the mitochondrion inner membrane. In terms of biological role, PHB proteins are essential during embryonic development and are required for somatic and germline differentiation in the larval gonad. A deficiency in PHB proteins results in altered mitochondrial biogenesis in body wall muscle cells. The chain is Mitochondrial prohibitin complex protein 1 (phb-1) from Caenorhabditis elegans.